A 1243-amino-acid chain; its full sequence is Membrane-associated phosphatidylinositol transfer protein 1 (1243 aa).

Phosphothreonine is present on residues Thr59, Thr282, and Thr287. The disordered stretch occupies residues 259-330; sequence CNTGSEGPEA…HGGGVSPQSL (72 aa). The span at 271–283 shows a compositional bias: polar residues; sequence PGKSSTEARPGTS. Residues 299 to 319 are compositionally biased toward low complexity; that stretch reads ASPDASFGKQWSSSSRSSYSS. A phosphoserine mark is found at Ser300, Ser304, Ser319, Ser326, Ser329, Ser342, Ser345, Ser346, and Ser373. Residue Ser382 is modified to Phosphoserine; by CDK1. Over residues 581–593 the composition is skewed to low complexity; sequence AGPGSRGSSRRGS. The interval 581–679 is disordered; the sequence is AGPGSRGSSR…PASSEAPDGP (99 aa). Residues Ser593, Ser600, and Ser621 each carry the phosphoserine modification. Residues 643-658 show a composition bias toward polar residues; sequence GSQNSLQVASTATSSG. The region spanning 684–878 is the DDHD domain; sequence RLDFKVSGFF…VVAFILRQVI (195 aa). The residue at position 895 (Ser895) is a Phosphoserine. The tract at residues 1206–1243 is disordered; it reads LLRSRGPSQVDREGPGTPPTTLARGKTRSISLKLDSEE. Omega-N-methylarginine is present on residues Arg1210 and Arg1217. Ser1236 carries the phosphoserine modification.

This sequence belongs to the PtdIns transfer protein family. PI transfer class IIA subfamily. As to quaternary structure, interacts with PTK2B via its C-terminus. Interacts with RHOA. Has higher affinity for the inactive, GDP-bound form of RHOA. The CDK1-phosphorylated form interacts with PLK1. Interacts with VAPB and PIK4CA. In terms of processing, phosphorylated on multiple sites by CDK1 at the onset of mitosis. Phosphorylation facilitates dissociation from the Golgi complex and is required for interaction with PLK1. Phosphorylated on threonine residues upon treatment with oleic acid. Post-translationally, phosphorylated on tyrosine residues by PTK2B. Detected at high levels in brain, and at lower levels in lung, kidney, spleen and liver (at protein level). Ubiquitous. Highly expressed in embryonic retina and the central nervous system.

It is found in the cytoplasm. It localises to the golgi apparatus. The protein resides in the golgi stack membrane. Its subcellular location is the endoplasmic reticulum membrane. The protein localises to the lipid droplet. It is found in the cleavage furrow. It localises to the midbody. It catalyses the reaction a 1,2-diacyl-sn-glycero-3-phospho-(1D-myo-inositol)(in) = a 1,2-diacyl-sn-glycero-3-phospho-(1D-myo-inositol)(out). In terms of biological role, catalyzes the transfer of phosphatidylinositol (PI) between membranes. Binds PI. Also binds phosphatidylcholine (PC) and phosphatidic acid (PA) with the binding affinity order of PI &gt; PA &gt; PC. Regulates RHOA activity, and plays a role in cytoskeleton remodeling. Necessary for normal completion of cytokinesis. Plays a role in maintaining normal diacylglycerol levels in the Golgi apparatus. Necessary for maintaining the normal structure of the endoplasmic reticulum and the Golgi apparatus. Required for protein export from the endoplasmic reticulum and the Golgi. Binds calcium ions. This is Membrane-associated phosphatidylinositol transfer protein 1 (Pitpnm1) from Mus musculus (Mouse).